Consider the following 80-residue polypeptide: Serine palmitoyltransferase small subunit A (80 aa).

Residues methionine 1 to histidine 21 lie on the Cytoplasmic side of the membrane. Residues methionine 22 to leucine 38 traverse the membrane as a helical segment. Over glutamate 39–arginine 43 the chain is Lumenal. A helical transmembrane segment spans residues threonine 44–proline 66. Residues glutamine 67–glutamine 80 are Cytoplasmic-facing.

This sequence belongs to the SPTSS family. SPTSSA subfamily. Component of the serine palmitoyltransferase (SPT) complex, which is composed of SPTLC1, SPTLC2 or SPTLC3 and SPTSSA or SPTSSB. The heterodimer consisting of SPTLC1 and SPTLC2/SPTLC3 forms the catalytic core of the enzyme, while SPTSSA or SPTSSB subunits determine substrate specificity. SPT also interacts with ORMDL proteins, especially ORMDL3, which negatively regulate SPT activity in the presence of ceramides.

It is found in the endoplasmic reticulum membrane. It participates in lipid metabolism; sphingolipid metabolism. Its function is as follows. Component of the serine palmitoyltransferase multisubunit enzyme (SPT) that catalyzes the initial and rate-limiting step in sphingolipid biosynthesis by condensing L-serine and activated acyl-CoA (most commonly palmitoyl-CoA) to form long-chain bases. The SPT complex is composed of SPTLC1, SPTLC2 or SPTLC3 and SPTSSA or SPTSSB. Within this complex, the heterodimer consisting of SPTLC1 and SPTLC2/SPTLC3 forms the catalytic core. Within the SPT complex, SPTSSA stimulates the catalytic activity and plays a role in substrate specificity, which depends upon the overall complex composition. The SPTLC1-SPTLC2-SPTSSA complex shows a strong preference for C16-CoA substrate, while the SPTLC1-SPTLC3-SPTSSA isozyme uses both C14-CoA and C16-CoA as substrates, with a slight preference for C14-CoA. Independently of its action as a SPT component, may be involved in MBOAT7 localization to mitochondria-associated membranes, a membrane bridge between the endoplasmic reticulum and mitochondria, may hence affect MBOAT7-catalyzed incorporation of arachidonic acid into phosphatidylinositol. This is Serine palmitoyltransferase small subunit A (sptssa) from Xenopus tropicalis (Western clawed frog).